The primary structure comprises 73 residues: MANKEELIEFEGVVTETLPNTMFRVRLENGHEVIAHISGKMRKHYIRILTGDNVKVEMTPYDLSKGRITYRAR.

An S1-like domain is found at 1–73 (MANKEELIEF…SKGRITYRAR (73 aa)).

Belongs to the IF-1 family. In terms of assembly, component of the 30S ribosomal translation pre-initiation complex which assembles on the 30S ribosome in the order IF-2 and IF-3, IF-1 and N-formylmethionyl-tRNA(fMet); mRNA recruitment can occur at any time during PIC assembly.

The protein localises to the cytoplasm. Its function is as follows. One of the essential components for the initiation of protein synthesis. Stabilizes the binding of IF-2 and IF-3 on the 30S subunit to which N-formylmethionyl-tRNA(fMet) subsequently binds. Helps modulate mRNA selection, yielding the 30S pre-initiation complex (PIC). Upon addition of the 50S ribosomal subunit IF-1, IF-2 and IF-3 are released leaving the mature 70S translation initiation complex. In Acinetobacter baylyi (strain ATCC 33305 / BD413 / ADP1), this protein is Translation initiation factor IF-1.